The primary structure comprises 298 residues: Tyrosine recombinase XerC (298 aa).

Residues 1–84 (MNHIQDAFLN…TLRTFYEYWM (84 aa)) enclose the Core-binding (CB) domain. A Tyr recombinase domain is found at 105 to 286 (YLPQFFYEEE…SNQQLRKVYL (182 aa)). Residues arginine 145, lysine 169, histidine 238, arginine 241, and histidine 264 contribute to the active site. The active-site O-(3'-phospho-DNA)-tyrosine intermediate is tyrosine 273.

It belongs to the 'phage' integrase family. XerC subfamily. As to quaternary structure, forms a cyclic heterotetrameric complex composed of two molecules of XerC and two molecules of XerD.

The protein localises to the cytoplasm. Functionally, site-specific tyrosine recombinase, which acts by catalyzing the cutting and rejoining of the recombining DNA molecules. The XerC-XerD complex is essential to convert dimers of the bacterial chromosome into monomers to permit their segregation at cell division. It also contributes to the segregational stability of plasmids. In Staphylococcus aureus (strain USA300), this protein is Tyrosine recombinase XerC.